Here is a 241-residue protein sequence, read N- to C-terminus: Beta-casein (241 aa).

An N-terminal signal peptide occupies residues 1–15; that stretch reads MKILILACLVALALA. The interval 21–45 is disordered; that stretch reads LNVSSETVESLSSNEPDSSSEESIT. At Ser24 the chain carries Phosphoserine; in form 4-P, form 5-P, form 6-P and form 7-P. Ser25 bears the Phosphoserine; in form 7-P mark. Position 27 is a phosphothreonine; in form 6-P and form 7-P (Thr27). 2 positions are modified to phosphoserine: Ser30 and Ser32. Ser33 carries the phosphoserine; in form 5-P, form 6-P and form 7-P modification. A phosphoserine; in form 4-P, form 5-P, form 6-P and form 7-P mark is found at Ser38, Ser39, and Ser40. Asn150 carries the deamidated asparagine modification.

It belongs to the beta-casein family. Post-translationally, there are at least five different forms found in milk, with varying degrees of phosphorylation. These include form 3-P which is phosphorylated at three sites that have not been determined, this form is present in very low amounts, form 4-P which is phosphorylated at four sites, form 5-P which is phosphorylated at five sites, form 6-P which is phosphorylated at six sites, and form 7-P which is phosphorylated at seven sites. Spontaneous deamidation of Asn-150 produces aspartate or isoaspartate. In terms of tissue distribution, mammary gland specific. Secreted in milk.

It localises to the secreted. Functionally, important role in determination of the surface properties of the casein micelles. This is Beta-casein from Equus caballus (Horse).